The sequence spans 301 residues: Cytosolic sulfotransferase 3 (301 aa).

Residue 53–58 (KAGTTW) participates in 3'-phosphoadenylyl sulfate binding. H115 (proton acceptor) is an active-site residue. 3'-phosphoadenylyl sulfate is bound by residues R137, S145, Y201, 235-240 (VQFDAM), and 263-265 (RKG).

Belongs to the sulfotransferase 1 family.

Its subcellular location is the cytoplasm. With respect to regulation, inhibited by Hg(2+), Co(2+), Zn(2+), Cd(2+), Cu(2+) and Pb(2+) ions. Activated slightly by Mn(2+), Ca(2+) and Mg(2+) ions. In terms of biological role, sulfotransferase that utilizes 3'-phospho-5'-adenylyl sulfate (PAPS) as sulfonate donor to catalyze the sulfate conjugation of a variety of xenobiotic and endogenous compounds, including dopamine, T3 (triiodo-L-thyronine), T4 (thyroxine), estrone, DHEA (dehydroepiandrosterone), flavonoids, isoflavonoids and other phenolic compounds. This Danio rerio (Zebrafish) protein is Cytosolic sulfotransferase 3.